Here is a 317-residue protein sequence, read N- to C-terminus: Probable arabinan endo-1,5-alpha-L-arabinosidase C (317 aa).

An N-terminal signal peptide occupies residues 1-17 (MLSFLAALSLPLALVNA). The active-site Proton acceptor is Asp-32. The N-linked (GlcNAc...) asparagine glycan is linked to Asn-190. The active-site Proton donor is the Glu-198.

It belongs to the glycosyl hydrolase 43 family.

The protein localises to the secreted. It carries out the reaction Endohydrolysis of (1-&gt;5)-alpha-arabinofuranosidic linkages in (1-&gt;5)-arabinans.. The protein operates within glycan metabolism; L-arabinan degradation. Functionally, endo-1,5-alpha-L-arabinanase involved in degradation of pectin. Its preferred substrate is linear 1,5-alpha-L-arabinan. The chain is Probable arabinan endo-1,5-alpha-L-arabinosidase C (abnC) from Aspergillus flavus (strain ATCC 200026 / FGSC A1120 / IAM 13836 / NRRL 3357 / JCM 12722 / SRRC 167).